A 776-amino-acid chain; its full sequence is Isoamylase (776 aa).

The signal sequence occupies residues 1–26 (MKCPKILAALLGCAVLAGVPAMPAHA). Asp154, Glu255, Thr256, Asn258, and Asp285 together coordinate Ca(2+). The Nucleophile role is filled by Asp401. An intrachain disulfide couples Cys410 to Cys422. Residue Glu461 is the Proton donor of the active site. Disulfide bonds link Cys546/Cys616 and Cys738/Cys766.

This sequence belongs to the glycosyl hydrolase 13 family. Monomer. Ca(2+) serves as cofactor.

It is found in the secreted. It catalyses the reaction Hydrolysis of (1-&gt;6)-alpha-D-glucosidic branch linkages in glycogen, amylopectin and their beta-limit dextrins.. This is Isoamylase (iam) from Pseudomonas amyloderamosa.